We begin with the raw amino-acid sequence, 260 residues long: Putative methylesterase 19 (260 aa).

Serine 81 (acyl-ester intermediate) is an active-site residue. Active-site charge relay system residues include aspartate 210 and histidine 238.

It belongs to the AB hydrolase superfamily. Methylesterase family.

In terms of biological role, putative methylesterase. The polypeptide is Putative methylesterase 19 (Arabidopsis thaliana (Mouse-ear cress)).